The primary structure comprises 177 residues: PRELI domain-containing protein 2 (177 aa).

Residues 1–175 enclose the PRELI/MSF1 domain; that stretch reads MGVTVDVHQV…LLKEQCGSPL (175 aa).

The sequence is that of PRELI domain-containing protein 2 (Prelid2) from Mus musculus (Mouse).